The chain runs to 110 residues: Nucleoid-associated protein Tola_2216 (110 aa).

It belongs to the YbaB/EbfC family. Homodimer.

It is found in the cytoplasm. It localises to the nucleoid. Functionally, binds to DNA and alters its conformation. May be involved in regulation of gene expression, nucleoid organization and DNA protection. The chain is Nucleoid-associated protein Tola_2216 from Tolumonas auensis (strain DSM 9187 / NBRC 110442 / TA 4).